A 109-amino-acid polypeptide reads, in one-letter code: Tetracenomycin F2 cyclase (109 aa).

Homodimer.

It catalyses the reaction tetracenomycin F2 + H(+) = tetracenomycin F1 + H2O. It participates in antibiotic biosynthesis; tetracenomycin C biosynthesis. Functionally, catalyzing the conversion of tetracenomycin F2 to tetracenomycin F1. The sequence is that of Tetracenomycin F2 cyclase (tcmI) from Streptomyces glaucescens.